The sequence spans 309 residues: Extracellular agarase (309 aa).

The tat-type signal signal peptide spans M1 to A30. A GH16 domain is found at L33–V309. E155 functions as the Nucleophile in the catalytic mechanism. The active-site Proton donor is the E160.

Belongs to the glycosyl hydrolase 16 family. Post-translationally, predicted to be exported by the Tat system. The position of the signal peptide cleavage has been experimentally proven.

The protein localises to the secreted. It carries out the reaction Hydrolysis of (1-&gt;4)-beta-D-galactosidic linkages in agarose, giving the tetramer as the predominant product.. The protein is Extracellular agarase (dagA) of Streptomyces coelicolor (strain ATCC BAA-471 / A3(2) / M145).